The chain runs to 155 residues: UPF0178 protein Amet_2995 (155 aa).

Belongs to the UPF0178 family.

This Alkaliphilus metalliredigens (strain QYMF) protein is UPF0178 protein Amet_2995.